Consider the following 354-residue polypeptide: Homeobox protein Nkx-2.4 (354 aa).

A DNA-binding region (homeobox) is located at residues 188–247 (RRKRRVLFSQAQVYELERRFKQQKYLSAPEREHLASMIHLTPTQVKIWFQNHRYKMKRQA). The disordered stretch occupies residues 245–329 (RQAKDKAAQQ…PALHGPGGGL (85 aa)). The span at 262 to 272 (GPPPPPPPPSP) shows a compositional bias: pro residues. The span at 290–304 (GAGTPTPGQGGQQPQ) shows a compositional bias: low complexity.

This sequence belongs to the NK-2 homeobox family. As to expression, in the embryo it is detected in the posterior hypothalamus and later in the head. In the adult it is detected only in testis.

The protein resides in the nucleus. Functionally, probable transcription factor. This chain is Homeobox protein Nkx-2.4 (Nkx2-4), found in Mus musculus (Mouse).